Consider the following 72-residue polypeptide: MIIPWQQLEPETLLNLIESFVLREGTDYGEDEKSLEQKVANIRHQLERGDVMLVWSELHESVNIVPKEMFHS.

This sequence belongs to the UPF0270 family.

The chain is UPF0270 protein plu0398 from Photorhabdus laumondii subsp. laumondii (strain DSM 15139 / CIP 105565 / TT01) (Photorhabdus luminescens subsp. laumondii).